Consider the following 259-residue polypeptide: Sorbitol-6-phosphate 2-dehydrogenase (259 aa).

Val4–Asp33 lines the NAD(+) pocket. Ser141 provides a ligand contact to substrate. Tyr154 serves as the catalytic Proton acceptor.

The protein belongs to the short-chain dehydrogenases/reductases (SDR) family. Homotetramer.

It catalyses the reaction D-sorbitol 6-phosphate + NAD(+) = beta-D-fructose 6-phosphate + NADH + H(+). The protein operates within carbohydrate metabolism; D-sorbitol degradation; D-fructose 6-phosphate from D-sorbitol 6-phosphate: step 1/1. This chain is Sorbitol-6-phosphate 2-dehydrogenase (srlD), found in Escherichia coli (strain K12).